A 483-amino-acid polypeptide reads, in one-letter code: Aspartyl/glutamyl-tRNA(Asn/Gln) amidotransferase subunit B (483 aa).

It belongs to the GatB/GatE family. GatB subfamily. As to quaternary structure, heterotrimer of A, B and C subunits.

The enzyme catalyses L-glutamyl-tRNA(Gln) + L-glutamine + ATP + H2O = L-glutaminyl-tRNA(Gln) + L-glutamate + ADP + phosphate + H(+). It carries out the reaction L-aspartyl-tRNA(Asn) + L-glutamine + ATP + H2O = L-asparaginyl-tRNA(Asn) + L-glutamate + ADP + phosphate + 2 H(+). In terms of biological role, allows the formation of correctly charged Asn-tRNA(Asn) or Gln-tRNA(Gln) through the transamidation of misacylated Asp-tRNA(Asn) or Glu-tRNA(Gln) in organisms which lack either or both of asparaginyl-tRNA or glutaminyl-tRNA synthetases. The reaction takes place in the presence of glutamine and ATP through an activated phospho-Asp-tRNA(Asn) or phospho-Glu-tRNA(Gln). This chain is Aspartyl/glutamyl-tRNA(Asn/Gln) amidotransferase subunit B, found in Roseiflexus castenholzii (strain DSM 13941 / HLO8).